The primary structure comprises 403 residues: Phosphopentomutase (403 aa).

Mn(2+)-binding residues include aspartate 13, aspartate 298, histidine 303, aspartate 339, histidine 340, and histidine 351.

It belongs to the phosphopentomutase family. Mn(2+) is required as a cofactor.

Its subcellular location is the cytoplasm. The catalysed reaction is 2-deoxy-alpha-D-ribose 1-phosphate = 2-deoxy-D-ribose 5-phosphate. It catalyses the reaction alpha-D-ribose 1-phosphate = D-ribose 5-phosphate. The protein operates within carbohydrate degradation; 2-deoxy-D-ribose 1-phosphate degradation; D-glyceraldehyde 3-phosphate and acetaldehyde from 2-deoxy-alpha-D-ribose 1-phosphate: step 1/2. In terms of biological role, isomerase that catalyzes the conversion of deoxy-ribose 1-phosphate (dRib-1-P) and ribose 1-phosphate (Rib-1-P) to deoxy-ribose 5-phosphate (dRib-5-P) and ribose 5-phosphate (Rib-5-P), respectively. The chain is Phosphopentomutase from Streptococcus thermophilus (strain ATCC BAA-250 / LMG 18311).